The following is a 125-amino-acid chain: Nascent polypeptide-associated complex protein (125 aa).

The 68-residue stretch at 9 to 76 folds into the NAC-A/B domain; the sequence is PRMMKQMQKM…SKNTSKTAEK (68 aa).

It belongs to the NAC-alpha family. Homodimer. Interacts with the ribosome. Binds ribosomal RNA.

Functionally, contacts the emerging nascent chain on the ribosome. This chain is Nascent polypeptide-associated complex protein, found in Methanococcus vannielii (strain ATCC 35089 / DSM 1224 / JCM 13029 / OCM 148 / SB).